The primary structure comprises 177 residues: ATP synthase subunit delta (177 aa).

The protein belongs to the ATPase delta chain family. F-type ATPases have 2 components, F(1) - the catalytic core - and F(0) - the membrane proton channel. F(1) has five subunits: alpha(3), beta(3), gamma(1), delta(1), epsilon(1). F(0) has three main subunits: a(1), b(2) and c(10-14). The alpha and beta chains form an alternating ring which encloses part of the gamma chain. F(1) is attached to F(0) by a central stalk formed by the gamma and epsilon chains, while a peripheral stalk is formed by the delta and b chains.

It localises to the cell membrane. In terms of biological role, f(1)F(0) ATP synthase produces ATP from ADP in the presence of a proton or sodium gradient. F-type ATPases consist of two structural domains, F(1) containing the extramembraneous catalytic core and F(0) containing the membrane proton channel, linked together by a central stalk and a peripheral stalk. During catalysis, ATP synthesis in the catalytic domain of F(1) is coupled via a rotary mechanism of the central stalk subunits to proton translocation. Functionally, this protein is part of the stalk that links CF(0) to CF(1). It either transmits conformational changes from CF(0) to CF(1) or is implicated in proton conduction. This chain is ATP synthase subunit delta, found in Streptococcus suis (strain 98HAH33).